The chain runs to 774 residues: 5-methyltetrahydropteroyltriglutamate--homocysteine methyltransferase (774 aa).

5-methyltetrahydropteroyltri-L-glutamate-binding positions include 24 to 27 (RELK) and lysine 120. Residues 446 to 448 (IGS) and glutamate 499 each bind L-homocysteine. Residues 446-448 (IGS) and glutamate 499 each bind L-methionine. Tryptophan 576 contributes to the 5-methyltetrahydropteroyltri-L-glutamate binding site. Aspartate 614 provides a ligand contact to L-homocysteine. L-methionine is bound at residue aspartate 614. Residue glutamate 620 participates in 5-methyltetrahydropteroyltri-L-glutamate binding. The Zn(2+) site is built by histidine 656, cysteine 658, and glutamate 680. Histidine 709 (proton donor) is an active-site residue. Cysteine 741 is a Zn(2+) binding site.

This sequence belongs to the vitamin-B12 independent methionine synthase family. The cofactor is Zn(2+).

It catalyses the reaction 5-methyltetrahydropteroyltri-L-glutamate + L-homocysteine = tetrahydropteroyltri-L-glutamate + L-methionine. It participates in amino-acid biosynthesis; L-methionine biosynthesis via de novo pathway; L-methionine from L-homocysteine (MetE route): step 1/1. Its function is as follows. Catalyzes the transfer of a methyl group from 5-methyltetrahydrofolate to homocysteine resulting in methionine formation. The protein is 5-methyltetrahydropteroyltriglutamate--homocysteine methyltransferase of Streptomyces griseus subsp. griseus (strain JCM 4626 / CBS 651.72 / NBRC 13350 / KCC S-0626 / ISP 5235).